The chain runs to 370 residues: Queuine tRNA-ribosyltransferase (370 aa).

Residue aspartate 93 is the Proton acceptor of the active site. Substrate contacts are provided by residues 93 to 97 (DSGGF), aspartate 147, glutamine 189, and glycine 216. Positions 247–253 (GVGSPDC) are RNA binding. The active-site Nucleophile is the aspartate 266. Positions 271–275 (TRIAR) are RNA binding; important for wobble base 34 recognition. Cysteine 304, cysteine 306, cysteine 309, and histidine 335 together coordinate Zn(2+).

Belongs to the queuine tRNA-ribosyltransferase family. In terms of assembly, homodimer. Within each dimer, one monomer is responsible for RNA recognition and catalysis, while the other monomer binds to the replacement base PreQ1. Requires Zn(2+) as cofactor.

It catalyses the reaction 7-aminomethyl-7-carbaguanine + guanosine(34) in tRNA = 7-aminomethyl-7-carbaguanosine(34) in tRNA + guanine. It functions in the pathway tRNA modification; tRNA-queuosine biosynthesis. Its function is as follows. Catalyzes the base-exchange of a guanine (G) residue with the queuine precursor 7-aminomethyl-7-deazaguanine (PreQ1) at position 34 (anticodon wobble position) in tRNAs with GU(N) anticodons (tRNA-Asp, -Asn, -His and -Tyr). Catalysis occurs through a double-displacement mechanism. The nucleophile active site attacks the C1' of nucleotide 34 to detach the guanine base from the RNA, forming a covalent enzyme-RNA intermediate. The proton acceptor active site deprotonates the incoming PreQ1, allowing a nucleophilic attack on the C1' of the ribose to form the product. After dissociation, two additional enzymatic reactions on the tRNA convert PreQ1 to queuine (Q), resulting in the hypermodified nucleoside queuosine (7-(((4,5-cis-dihydroxy-2-cyclopenten-1-yl)amino)methyl)-7-deazaguanosine). This Pelotomaculum thermopropionicum (strain DSM 13744 / JCM 10971 / SI) protein is Queuine tRNA-ribosyltransferase.